The sequence spans 129 residues: Large ribosomal subunit protein bL19c (129 aa).

It belongs to the bacterial ribosomal protein bL19 family.

The protein localises to the plastid. This Prototheca wickerhamii protein is Large ribosomal subunit protein bL19c.